Consider the following 409-residue polypeptide: Pleckstrin homology domain-containing family O member 1 (409 aa).

Residues 1–24 (MMKKNNSAKRGPQDGNQQPAPPEK) are disordered. Residues 21 to 132 (PPEKVGWVRK…WINALNSAIT (112 aa)) enclose the PH domain. The interaction with capping proteins (CPs) stretch occupies residues 133 to 193 (RAKNRILDEV…MLTLDLIQEE (61 aa)). Residues 136-308 (NRILDEVTVE…LPNPGQLSRI (173 aa)) are interaction with ATM, CKIP, IFP35 and NMI. The tract at residues 218–267 (LAGSRRRADSDRIQPSADRASSLSRPWEKTDKGATYTPQAPKKLTPTEKG) is disordered. Phosphoserine occurs at positions 227 and 271. The segment at 308–409 (IQDLVARKLE…PHSQYRKSLM (102 aa)) is negative regulator of AP-1 activity. Disordered regions lie at residues 325–350 (EVQGLGDGKRKAKDPPRSPPDSESEQ) and 390–409 (TPDSHLRQTTPHSQYRKSLM). Residues 331–340 (DGKRKAKDPP) are compositionally biased toward basic and acidic residues. Ser-342 carries the phosphoserine modification. A compositionally biased stretch (polar residues) spans 390–402 (TPDSHLRQTTPHS).

Heterodimer or homodimer. Interacts with CK2 and actin capping subunits (capping protein CP-alpha and CP-beta). CKIP1 and CK2 together inhibit the activity of actin capping protein at the barbed ends of actin filaments. Interacts with ATM, IFP35, JUN, JUND, NMI and PI3K. Interacts with AKT1, AKT2 and AKT3 (each isozyme of PKB), PtdIns(3,5)P2, PtdIns(4,5)P2 and PtdIns(3,4,5)P2. In terms of processing, C-terminal fragments could be released during apoptosis via caspase-3-dependent cleavage. As to expression, abundantly expressed in skeletal muscle and heart, moderately in kidney, liver, brain and placenta and sparingly in the pancreas and lung. Easily detectable in cell lines such as MOLT-4, HEK293 and Jurkat.

It is found in the cell membrane. The protein localises to the nucleus. It localises to the cytoplasm. In terms of biological role, plays a role in the regulation of the actin cytoskeleton through its interactions with actin capping protein (CP). May function to target CK2 to the plasma membrane thereby serving as an adapter to facilitate the phosphorylation of CP by protein kinase 2 (CK2). Appears to target ATM to the plasma membrane. Appears to also inhibit tumor cell growth by inhibiting AKT-mediated cell-survival. Also implicated in PI3K-regulated muscle differentiation, the regulation of AP-1 activity (plasma membrane bound AP-1 regulator that translocates to the nucleus) and the promotion of apoptosis induced by tumor necrosis factor TNF. When bound to PKB, it inhibits it probably by decreasing PKB level of phosphorylation. The sequence is that of Pleckstrin homology domain-containing family O member 1 (PLEKHO1) from Homo sapiens (Human).